The primary structure comprises 71 residues: Small ribosomal subunit protein bS21 (71 aa).

This sequence belongs to the bacterial ribosomal protein bS21 family.

The protein is Small ribosomal subunit protein bS21 of Shewanella sp. (strain MR-4).